The sequence spans 171 residues: S-ribosylhomocysteine lyase (171 aa).

Fe cation is bound by residues H54, H58, and C128.

Belongs to the LuxS family. As to quaternary structure, homodimer. Requires Fe cation as cofactor.

The enzyme catalyses S-(5-deoxy-D-ribos-5-yl)-L-homocysteine = (S)-4,5-dihydroxypentane-2,3-dione + L-homocysteine. Its function is as follows. Involved in the synthesis of autoinducer 2 (AI-2) which is secreted by bacteria and is used to communicate both the cell density and the metabolic potential of the environment. The regulation of gene expression in response to changes in cell density is called quorum sensing. Catalyzes the transformation of S-ribosylhomocysteine (RHC) to homocysteine (HC) and 4,5-dihydroxy-2,3-pentadione (DPD). This chain is S-ribosylhomocysteine lyase, found in Salmonella arizonae (strain ATCC BAA-731 / CDC346-86 / RSK2980).